The chain runs to 515 residues: Maturase K (515 aa).

This sequence belongs to the intron maturase 2 family. MatK subfamily.

The protein resides in the plastid. Its subcellular location is the chloroplast. In terms of biological role, usually encoded in the trnK tRNA gene intron. Probably assists in splicing its own and other chloroplast group II introns. The chain is Maturase K from Pinus elliottii (Slash pine).